We begin with the raw amino-acid sequence, 252 residues long: 2-succinyl-6-hydroxy-2,4-cyclohexadiene-1-carboxylate synthase (252 aa).

It belongs to the AB hydrolase superfamily. MenH family. Monomer.

The enzyme catalyses 5-enolpyruvoyl-6-hydroxy-2-succinyl-cyclohex-3-ene-1-carboxylate = (1R,6R)-6-hydroxy-2-succinyl-cyclohexa-2,4-diene-1-carboxylate + pyruvate. Its pathway is quinol/quinone metabolism; 1,4-dihydroxy-2-naphthoate biosynthesis; 1,4-dihydroxy-2-naphthoate from chorismate: step 3/7. The protein operates within quinol/quinone metabolism; menaquinone biosynthesis. Its function is as follows. Catalyzes a proton abstraction reaction that results in 2,5-elimination of pyruvate from 2-succinyl-5-enolpyruvyl-6-hydroxy-3-cyclohexene-1-carboxylate (SEPHCHC) and the formation of 2-succinyl-6-hydroxy-2,4-cyclohexadiene-1-carboxylate (SHCHC). This chain is 2-succinyl-6-hydroxy-2,4-cyclohexadiene-1-carboxylate synthase, found in Salmonella newport (strain SL254).